A 1069-amino-acid chain; its full sequence is Protogenin B (1069 aa).

A signal peptide spans 1-26 (MGSVRWKTHQQWLIIFWILSFSGVFG). Residues 27–936 (FSELWFSIEP…LYHIDEKSMS (910 aa)) are Extracellular-facing. Ig-like domains are found at residues 30-117 (LWFS…ARLT), 122-208 (LVFS…AELV), 221-308 (PLII…GNVT), and 312-396 (PSLV…SRLI). 2 cysteine pairs are disulfide-bonded: cysteine 51/cysteine 100 and cysteine 143/cysteine 191. Asparagine 81, asparagine 88, asparagine 180, and asparagine 229 each carry an N-linked (GlcNAc...) asparagine glycan. A disulfide bridge connects residues cysteine 242 and cysteine 290. N-linked (GlcNAc...) asparagine glycosylation is found at asparagine 299 and asparagine 306. The interval 317-336 (KPESQTRPRAGTARFSCQAE) is disordered. Cysteines 333 and 380 form a disulfide. 5 Fibronectin type-III domains span residues 406-500 (APRN…TLED), 502-601 (PLRT…TPKT), 608-701 (PAPN…CPST), 711-804 (PPDH…TLLE), and 809-904 (PPES…VKGK). 3 N-linked (GlcNAc...) asparagine glycosylation sites follow: asparagine 458, asparagine 473, and asparagine 560. A compositionally biased stretch (polar residues) spans 590-605 (PSAWSSHRTPKTSSAT). A disordered region spans residues 590–609 (PSAWSSHRTPKTSSATVPPA). 3 N-linked (GlcNAc...) asparagine glycosylation sites follow: asparagine 618, asparagine 720, and asparagine 834. Residues 937–957 (GIIVGVCIALSCIILCIFILL) form a helical membrane-spanning segment. Topologically, residues 958–1069 (SKTQTQKSAS…KTVLCYEDEA (112 aa)) are cytoplasmic.

It belongs to the immunoglobulin superfamily. DCC family. As to expression, initially expressed in the ventral forebrain and ventral spinal cord. Later, also expressed in the midbrain and in parts of the diencephalon and hindbrain.

It is found in the membrane. Functionally, may play a role in anteroposterior axis elongation. The protein is Protogenin B of Danio rerio (Zebrafish).